The following is a 330-amino-acid chain: T-cell leukemia homeobox protein 1 (330 aa).

The interval 186-207 is disordered; sequence DRFTGHPYQNRTPPKKKKPRTS. The segment at residues 201–260 is a DNA-binding region (homeobox); it reads KKKPRTSFTRLQICELEKRFHRQKYLASAERAALAKALKMTDAQVKTWFQNRRTKWRRQT. Position 236 is an N6-acetyllysine (lysine 236).

Interacts with MEIS1, MEIS2, PBX1, PBX2 and PBX3.

It is found in the nucleus. Controls the genesis of the spleen. Binds to the DNA sequence 5'-GGCGGTAAGTGG-3'. In Homo sapiens (Human), this protein is T-cell leukemia homeobox protein 1 (TLX1).